Consider the following 173-residue polypeptide: Crossover junction endodeoxyribonuclease RuvC (173 aa).

Active-site residues include D8, E69, and D141. Positions 8, 69, and 141 each coordinate Mg(2+).

This sequence belongs to the RuvC family. As to quaternary structure, homodimer which binds Holliday junction (HJ) DNA. The HJ becomes 2-fold symmetrical on binding to RuvC with unstacked arms; it has a different conformation from HJ DNA in complex with RuvA. In the full resolvosome a probable DNA-RuvA(4)-RuvB(12)-RuvC(2) complex forms which resolves the HJ. The cofactor is Mg(2+).

The protein resides in the cytoplasm. The catalysed reaction is Endonucleolytic cleavage at a junction such as a reciprocal single-stranded crossover between two homologous DNA duplexes (Holliday junction).. Functionally, the RuvA-RuvB-RuvC complex processes Holliday junction (HJ) DNA during genetic recombination and DNA repair. Endonuclease that resolves HJ intermediates. Cleaves cruciform DNA by making single-stranded nicks across the HJ at symmetrical positions within the homologous arms, yielding a 5'-phosphate and a 3'-hydroxyl group; requires a central core of homology in the junction. The consensus cleavage sequence is 5'-(A/T)TT(C/G)-3'. Cleavage occurs on the 3'-side of the TT dinucleotide at the point of strand exchange. HJ branch migration catalyzed by RuvA-RuvB allows RuvC to scan DNA until it finds its consensus sequence, where it cleaves and resolves the cruciform DNA. The sequence is that of Crossover junction endodeoxyribonuclease RuvC from Stenotrophomonas maltophilia (strain K279a).